A 774-amino-acid chain; its full sequence is MWTPGGPPGSAGWDRRRLGARLRAAFAGLQELQGLRATQQERVRGALALQPPPAPAAPCGPHGLHGPEQQLEAALAALQEQLSRLRQQDIGLKTHLDQLDLQISKLQLDVGTASGEALDSDSRPSSGFYEMSDGGSCSLSTSCASVCSDHISPSLGSLLPVAQAHKARPSMGDWRPRSVDETTVPAWRPQATEEGARPPGSVEDAGQPWGTFWPRPVSTGDLDRALPADTGLQKASADAELLGLLCQGVDIPLHVPDPKYRQDLVSQGGREVYPYPSPLHAVALQSPLFVLTKETPQRGGPSFPRESPRGPAGLNTIQTGPVLEAGPARARAYIDRLLHLWGRETPAKGSEGEQGPLRHAASPSPQRQGGWSTDGGGRLLVFAPGREDEGGPAQSRGAGRGGPQQQGYMPLEGPQQSGSLPEEGSKPSNSCVLRETMVQASPSSKAQQTPSAQDYGRGNIISPSRMLDKSPSPASGHFAHPSFAASLKMGPPKSKAEKIKRSPMDKVLRFARQPLLLLDRPEGAHAAPQPSLEWDPAHWPTGRGGLQRRPALAWEAPGRSCSESTLYPMPVLVPLAVAPQESHRTSAQALFPFEASLLTSVARRKHRRWQSTVEISARARLASCPESNLGPPRPVARRAGGPLARGRPSLVRQDAYTRSDSEPSKHSAECDPRFPSVIPETSEGESSDHTTNRFGDRESSSSDEEGGAQSRDCDLALGYVAAGHAELAWTQEAPVSSGPLLSPVPKLCRIKASKALKKKIRRFQPTALKVMTMV.

The stretch at Pro67–Lys93 forms a coiled coil. 4 disordered regions span residues Arg188–Ala225, Thr295–Thr319, Thr345–Lys500, and Cys624–Ser710. A compositionally biased stretch (polar residues) spans Val438 to Ala452. Over residues Arg637–Pro648 the composition is skewed to low complexity. 2 stretches are compositionally biased toward basic and acidic residues: residues Ala655–Pro672 and Ser686–Ser700. The PDZ-binding motif lies at Met771–Val774.

It belongs to the dapper family. In terms of assembly, can form homodimers and heterodimers with DACT1 or DACT3. Interacts with CSNK1D, PKA catalytic subunit, PKC-type kinase, CSNK2B, DVL1, DVL2, DVL3, VANGL1, VANGL2, TGFBR1, CTNNB1, CTNND2, CTNND1, LEF1, TCF7, TCF7L1 and HDAC1.

Functionally, involved in regulation of intracellular signaling pathways during development. Negatively regulates the Nodal signaling pathway, possibly by promoting the lysosomal degradation of Nodal receptors, such as TGFBR1. May be involved in control of the morphogenetic behavior of kidney ureteric bud cells by keeping cells epithelial and restraining their mesenchymal character. May play an inhibitory role in the re-epithelialization of skin wounds by attenuating TGF-beta signaling. This chain is Dapper homolog 2 (DACT2), found in Homo sapiens (Human).